Consider the following 44-residue polypeptide: Poly-ADP-ribosylation-amplifying and CtIP-maintaining micropeptide (44 aa).

Positions 1 to 44 (MAASGGTKKAQSGGRRLREPSSRPSRRARQRPRRGALRKAGRFL) are disordered. The span at 24–44 (PSRRARQRPRRGALRKAGRFL) shows a compositional bias: basic residues.

Interacts with KLHL15; preventing ubiquitination and degradation of RBBP8/CtIP. Interacts with PARP1.

The protein resides in the nucleus. The protein localises to the nucleolus. It is found in the chromosome. Functionally, micropeptide that acts as a regulator of DNA repair both by preventing KLHL15-mediated ubiquitination and degradation of RBBP8/CtIP, and by promoting the poly-ADP-ribosyltransferase activity of PARP1. Prevents KLHL15-mediated ubiquitination of RBBP8/CtIP by competitively blocking the association between KLHL15 and RBBP8/CtIP. Recruited to DNA damage sites via association with poly-ADP-ribose chains, and enhances the poly-ADP-ribosyltransferase activity of PARP1. The protein is Poly-ADP-ribosylation-amplifying and CtIP-maintaining micropeptide of Homo sapiens (Human).